We begin with the raw amino-acid sequence, 360 residues long: Aminomethyltransferase (360 aa).

The protein belongs to the GcvT family. In terms of assembly, the glycine cleavage system is composed of four proteins: P, T, L and H.

The catalysed reaction is N(6)-[(R)-S(8)-aminomethyldihydrolipoyl]-L-lysyl-[protein] + (6S)-5,6,7,8-tetrahydrofolate = N(6)-[(R)-dihydrolipoyl]-L-lysyl-[protein] + (6R)-5,10-methylene-5,6,7,8-tetrahydrofolate + NH4(+). In terms of biological role, the glycine cleavage system catalyzes the degradation of glycine. The polypeptide is Aminomethyltransferase (Pseudoalteromonas translucida (strain TAC 125)).